The primary structure comprises 445 residues: Reticulon-4 receptor-like 1 (445 aa).

Positions 1–24 (MLRKGCCVELLLLLLAGELPLSGG) are cleaved as a signal peptide. An LRRNT domain is found at 25 to 54 (CPRDCVCYPSPMTVSCQAHNFAAIPEGIPE). LRR repeat units follow at residues 55 to 76 (DSER…HFSP), 77 to 98 (AMVT…TFEG), 101 to 123 (HLEE…TFQG), 126 to 147 (KLHA…IFGG), 150 to 171 (SLQY…IFVD), 174 to 195 (NLSH…IFRG), 198 to 219 (NLDR…AFHD), and 222 to 243 (RLTT…CLAP). Positions 255–306 (NAWDCGCRARSLWEWLRRFRGSSSVVPCATPELRQGQDLKSLRVEDFRNCTG) constitute an LRRCT domain. Disordered regions lie at residues 304 to 380 (CTGP…ELPE) and 401 to 421 (RPKR…SGVQ). Composition is skewed to basic residues over residues 352–366 (GSKK…HRNR) and 401–413 (RPKR…RRTP). The GPI-anchor amidated serine moiety is linked to residue serine 424. The helical transmembrane segment at 424–444 (SSGTALGVSLLAWILGLVVSL) threads the bilayer. The propeptide at 425 to 445 (SGTALGVSLLAWILGLVVSLR) is removed in mature form.

The protein belongs to the Nogo receptor family. In terms of assembly, identified in a complex that contains RTN4R, RTN4RL1 and NGFR; the interaction depends on the presence of chondroitin sulfate proteoglycans. Does not interact with MAG, OMG and RTN4. As to expression, detected in brain (at protein level). Expressed in various regions of the brain, including the cerebral cortex, hippocampus, striatum, thalamus and cerebellum.

Its subcellular location is the cell membrane. The protein localises to the membrane raft. The protein resides in the perikaryon. It is found in the cell projection. In terms of biological role, cell surface receptor. Plays a functionally redundant role in postnatal brain development and in regulating axon regeneration in the adult central nervous system. Contributes to normal axon migration across the brain midline and normal formation of the corpus callosum. Protects motoneurons against apoptosis; protection against apoptosis is probably mediated by MAG. Plays a role in inhibiting neurite outgrowth and axon regeneration via its binding to neuronal chondroitin sulfate proteoglycans. Binds heparin. Like other family members, plays a role in restricting the number dendritic spines and the number of synapses that are formed during brain development. Signaling mediates activation of Rho and downstream reorganization of the actin cytoskeleton. In Rattus norvegicus (Rat), this protein is Reticulon-4 receptor-like 1.